Here is a 92-residue protein sequence, read N- to C-terminus: Small ribosomal subunit protein uS19 (92 aa).

This sequence belongs to the universal ribosomal protein uS19 family.

Functionally, protein S19 forms a complex with S13 that binds strongly to the 16S ribosomal RNA. The sequence is that of Small ribosomal subunit protein uS19 from Chromobacterium violaceum (strain ATCC 12472 / DSM 30191 / JCM 1249 / CCUG 213 / NBRC 12614 / NCIMB 9131 / NCTC 9757 / MK).